The chain runs to 122 residues: Acidic phospholipase A2 (122 aa).

Disulfide bonds link cysteine 26/cysteine 115, cysteine 28/cysteine 44, cysteine 43/cysteine 95, cysteine 49/cysteine 122, cysteine 50/cysteine 88, cysteine 57/cysteine 81, and cysteine 75/cysteine 86. The Ca(2+) site is built by tyrosine 27, glycine 29, and glycine 31. Residue histidine 47 is part of the active site. Position 48 (aspartate 48) interacts with Ca(2+). Aspartate 89 is a catalytic residue.

It belongs to the phospholipase A2 family. Group II subfamily. D49 sub-subfamily. As to quaternary structure, monomer. Ca(2+) is required as a cofactor. In terms of tissue distribution, expressed by the venom gland.

It localises to the secreted. The enzyme catalyses a 1,2-diacyl-sn-glycero-3-phosphocholine + H2O = a 1-acyl-sn-glycero-3-phosphocholine + a fatty acid + H(+). Functionally, PLA2 catalyzes the calcium-dependent hydrolysis of the 2-acyl groups in 3-sn-phosphoglycerides. The polypeptide is Acidic phospholipase A2 (Gloydius blomhoffii (Mamushi)).